The primary structure comprises 474 residues: ATP synthase subunit beta 2 (474 aa).

156–163 (GGAGVGKT) serves as a coordination point for ATP.

This sequence belongs to the ATPase alpha/beta chains family. In terms of assembly, F-type ATPases have 2 components, CF(1) - the catalytic core - and CF(0) - the membrane proton channel. CF(1) has five subunits: alpha(3), beta(3), gamma(1), delta(1), epsilon(1). CF(0) has three main subunits: a(1), b(2) and c(9-12). The alpha and beta chains form an alternating ring which encloses part of the gamma chain. CF(1) is attached to CF(0) by a central stalk formed by the gamma and epsilon chains, while a peripheral stalk is formed by the delta and b chains.

Its subcellular location is the cell inner membrane. The enzyme catalyses ATP + H2O + 4 H(+)(in) = ADP + phosphate + 5 H(+)(out). Produces ATP from ADP in the presence of a proton gradient across the membrane. The catalytic sites are hosted primarily by the beta subunits. This is ATP synthase subunit beta 2 from Shewanella frigidimarina (strain NCIMB 400).